Consider the following 272-residue polypeptide: Tryptophan synthase alpha chain (272 aa).

Catalysis depends on proton acceptor residues glutamate 49 and aspartate 60.

It belongs to the TrpA family. In terms of assembly, tetramer of two alpha and two beta chains.

It carries out the reaction (1S,2R)-1-C-(indol-3-yl)glycerol 3-phosphate + L-serine = D-glyceraldehyde 3-phosphate + L-tryptophan + H2O. The protein operates within amino-acid biosynthesis; L-tryptophan biosynthesis; L-tryptophan from chorismate: step 5/5. In terms of biological role, the alpha subunit is responsible for the aldol cleavage of indoleglycerol phosphate to indole and glyceraldehyde 3-phosphate. The chain is Tryptophan synthase alpha chain from Acidithiobacillus ferrooxidans (strain ATCC 23270 / DSM 14882 / CIP 104768 / NCIMB 8455) (Ferrobacillus ferrooxidans (strain ATCC 23270)).